Here is a 394-residue protein sequence, read N- to C-terminus: Phosphopentomutase (394 aa).

The Mn(2+) site is built by D14, D287, H292, D328, H329, and H340.

The protein belongs to the phosphopentomutase family. Mn(2+) is required as a cofactor.

The protein localises to the cytoplasm. The catalysed reaction is 2-deoxy-alpha-D-ribose 1-phosphate = 2-deoxy-D-ribose 5-phosphate. It catalyses the reaction alpha-D-ribose 1-phosphate = D-ribose 5-phosphate. It functions in the pathway carbohydrate degradation; 2-deoxy-D-ribose 1-phosphate degradation; D-glyceraldehyde 3-phosphate and acetaldehyde from 2-deoxy-alpha-D-ribose 1-phosphate: step 1/2. Functionally, isomerase that catalyzes the conversion of deoxy-ribose 1-phosphate (dRib-1-P) and ribose 1-phosphate (Rib-1-P) to deoxy-ribose 5-phosphate (dRib-5-P) and ribose 5-phosphate (Rib-5-P), respectively. This chain is Phosphopentomutase, found in Listeria monocytogenes serotype 4b (strain CLIP80459).